A 287-amino-acid polypeptide reads, in one-letter code: Leucine-rich repeat-containing protein 72 (287 aa).

4 LRR repeats span residues 46 to 67 (DVFELFLSKKELTEVIDLSRFK), 68 to 89 (KLKYLWLHHNKLHGITFLTRNY), 90 to 111 (CLTELYLNNNAIFEIEGLHYLP), and 112 to 133 (SLHILLLHHNELTNIDATVKEL). The region spanning 147–185 (NPLCQYNLYRLYIIYHLPGVELLDRNQVTEKERRSMITI) is the LRRCT domain.

The protein is Leucine-rich repeat-containing protein 72 (LRRC72) of Homo sapiens (Human).